Reading from the N-terminus, the 423-residue chain is Voltage-dependent calcium channel gamma-8 subunit (423 aa).

4 helical membrane passes run valine 19–isoleucine 39, serine 127–alanine 147, isoleucine 157–isoleucine 177, and phenylalanine 207–isoleucine 227. Residues serine 251 and serine 254 each carry the phosphoserine modification. Residues arginine 271–isoleucine 304 are disordered. Residues serine 276–arginine 287 are compositionally biased toward low complexity. Residues valine 318–glycine 338 traverse the membrane as a helical segment. Disordered stretches follow at residues glycine 342–threonine 363 and valine 378–valine 423. Over residues proline 384–proline 399 the composition is skewed to pro residues. A compositionally biased stretch (polar residues) spans alanine 410–valine 423.

It belongs to the PMP-22/EMP/MP20 family. CACNG subfamily. Interacts with CACNA1C. Identified in a complex with the L-type calcium channel subunits CACNA1C, CACNA2D1 and either CACNB1 or CACNB2. Acts as an auxiliary subunit for AMPA-selective glutamate receptors (AMPARs). Found in a complex with GRIA1, GRIA2, GRIA3, GRIA4, CNIH2, CNIH3, CACNG2, CACNG3, CACNG4, CACNG5 and CACNG7. Interacts with CNIH2. Found in a complex with GRIA1, GRIA2, GRIA3, GRIA4, DLG4 and CNIH2. Palmitoylated. Probably palmitoylated by ZDHHC3 and ZDHHC7.

The protein resides in the cell membrane. It localises to the postsynaptic density membrane. Its function is as follows. Regulates the activity of L-type calcium channels that contain CACNA1C as pore-forming subunit. Regulates the trafficking and gating properties of AMPA-selective glutamate receptors (AMPARs). Promotes their targeting to the cell membrane and synapses and modulates their gating properties by slowing their rates of activation, deactivation and desensitization and by mediating their resensitization. Does not show subunit-specific AMPA receptor regulation and regulates all AMPAR subunits. Thought to stabilize the calcium channel in an inactivated (closed) state. The protein is Voltage-dependent calcium channel gamma-8 subunit of Mus musculus (Mouse).